A 427-amino-acid polypeptide reads, in one-letter code: Transcobalamin-2 (427 aa).

The signal sequence occupies residues 1–18 (MRHLGALLFLLGVLGALA). Disulfide bonds link C21–C267, C116–C309, and C165–C205. Cob(II)alamin contacts are provided by residues Q104, 152-156 (TSYYQ), H190, 190-194 (HHSVD), N242, S245, Q291, and 395-397 (WQL).

Belongs to the eukaryotic cobalamin transport proteins family. Interacts with CD320 (via LDL-receptor class A domains).

Its subcellular location is the secreted. Primary vitamin B12-binding and transport protein. Delivers cobalamin to cells. This Pongo abelii (Sumatran orangutan) protein is Transcobalamin-2 (TCN2).